Consider the following 358-residue polypeptide: UDP-N-acetylglucosamine--N-acetylmuramyl-(pentapeptide) pyrophosphoryl-undecaprenol N-acetylglucosamine transferase (358 aa).

Residues 10 to 12 (TGG), asparagine 124, arginine 165, serine 191, isoleucine 246, and glutamine 291 contribute to the UDP-N-acetyl-alpha-D-glucosamine site.

The protein belongs to the glycosyltransferase 28 family. MurG subfamily.

The protein resides in the cell inner membrane. The catalysed reaction is di-trans,octa-cis-undecaprenyl diphospho-N-acetyl-alpha-D-muramoyl-L-alanyl-D-glutamyl-meso-2,6-diaminopimeloyl-D-alanyl-D-alanine + UDP-N-acetyl-alpha-D-glucosamine = di-trans,octa-cis-undecaprenyl diphospho-[N-acetyl-alpha-D-glucosaminyl-(1-&gt;4)]-N-acetyl-alpha-D-muramoyl-L-alanyl-D-glutamyl-meso-2,6-diaminopimeloyl-D-alanyl-D-alanine + UDP + H(+). It participates in cell wall biogenesis; peptidoglycan biosynthesis. Cell wall formation. Catalyzes the transfer of a GlcNAc subunit on undecaprenyl-pyrophosphoryl-MurNAc-pentapeptide (lipid intermediate I) to form undecaprenyl-pyrophosphoryl-MurNAc-(pentapeptide)GlcNAc (lipid intermediate II). In Citrifermentans bemidjiense (strain ATCC BAA-1014 / DSM 16622 / JCM 12645 / Bem) (Geobacter bemidjiensis), this protein is UDP-N-acetylglucosamine--N-acetylmuramyl-(pentapeptide) pyrophosphoryl-undecaprenol N-acetylglucosamine transferase.